The chain runs to 245 residues: 1-(5-phosphoribosyl)-5-[(5-phosphoribosylamino)methylideneamino] imidazole-4-carboxamide isomerase (245 aa).

The Proton acceptor role is filled by aspartate 8. Aspartate 130 serves as the catalytic Proton donor.

This sequence belongs to the HisA/HisF family.

The protein localises to the cytoplasm. The enzyme catalyses 1-(5-phospho-beta-D-ribosyl)-5-[(5-phospho-beta-D-ribosylamino)methylideneamino]imidazole-4-carboxamide = 5-[(5-phospho-1-deoxy-D-ribulos-1-ylimino)methylamino]-1-(5-phospho-beta-D-ribosyl)imidazole-4-carboxamide. Its pathway is amino-acid biosynthesis; L-histidine biosynthesis; L-histidine from 5-phospho-alpha-D-ribose 1-diphosphate: step 4/9. This Teredinibacter turnerae (strain ATCC 39867 / T7901) protein is 1-(5-phosphoribosyl)-5-[(5-phosphoribosylamino)methylideneamino] imidazole-4-carboxamide isomerase.